Consider the following 506-residue polypeptide: Probable Xaa-Pro aminopeptidase BDBG_08406 (506 aa).

The Mn(2+) site is built by aspartate 285, aspartate 296, glutamate 433, and glutamate 471.

This sequence belongs to the peptidase M24B family. Mn(2+) is required as a cofactor.

The catalysed reaction is Release of any N-terminal amino acid, including proline, that is linked to proline, even from a dipeptide or tripeptide.. Its function is as follows. Catalyzes the removal of a penultimate prolyl residue from the N-termini of peptides. In Blastomyces gilchristii (strain SLH14081) (Blastomyces dermatitidis), this protein is Probable Xaa-Pro aminopeptidase BDBG_08406.